Consider the following 930-residue polypeptide: Translation initiation factor IF-2 (930 aa).

Disordered regions lie at residues 160-179 and 208-301; these read EPVE…FTDG and AKRA…AAAP. The segment covering 208–227 has biased composition (basic and acidic residues); that stretch reads AKRAAEEAKRTQPRAEKPAD. 2 stretches are compositionally biased toward basic residues: residues 263 to 272 and 288 to 301; these read GHGHKKHHHG and KRGA…AAAP. The tr-type G domain occupies 431-600; that stretch reads TRAPVVTVMG…SLQAEVLELT (170 aa). The segment at 440-447 is G1; the sequence is GHVDHGKT. 440–447 contacts GTP; that stretch reads GHVDHGKT. The segment at 465–469 is G2; it reads GITQH. Positions 486–489 are G3; it reads DTPG. GTP-binding positions include 486-490 and 540-543; these read DTPGH and NKCD. A G4 region spans residues 540 to 543; the sequence is NKCD. Residues 576-578 form a G5 region; the sequence is SAH.

Belongs to the TRAFAC class translation factor GTPase superfamily. Classic translation factor GTPase family. IF-2 subfamily.

The protein resides in the cytoplasm. Its function is as follows. One of the essential components for the initiation of protein synthesis. Protects formylmethionyl-tRNA from spontaneous hydrolysis and promotes its binding to the 30S ribosomal subunits. Also involved in the hydrolysis of GTP during the formation of the 70S ribosomal complex. In Cellvibrio japonicus (strain Ueda107) (Pseudomonas fluorescens subsp. cellulosa), this protein is Translation initiation factor IF-2.